The chain runs to 413 residues: MADDKKKQLEESKRLVELFKASSLASKKPKGHEFWDTQPVPKIDDKIIESGPIENKTLDDVRKDPLTLPPAFEWIELDCNKPEELKEIYTLLYENYVEDDDNMFRFDYSPEFLKWALQPPGFLKEWHIGVRVVESKKLVGFISGIPATIRVEGKPITMVEINFLCVHKKLREKRLAPVLIKEVTRRVNLRNIWQAAYTAGVVLPKPVAICKYWHRSIKQQKLVEVGFSAIPPKMTMASMVKLYRINDEMKHPLRPLTKEDVPSFKVLLDDYLSKYKIAPEFTTDEDVWHWFETRKDVITCYVKVDESTKKVTDAFSFYNLPSTIIGNAKHNTLKAAFSFYNVATTMSITDLVGDALVTAKKMDYDVFNCLDVFENSTFFKDLKFAVGDGDLQYYLYNYSTPTKKSSEIGLVLL.

9 residues coordinate tetradecanoyl-CoA: Phe-34, Trp-35, Phe-163, Leu-164, Cys-165, Val-166, Arg-174, Leu-175, and Ala-176.

It belongs to the NMT family.

The protein resides in the cytoplasm. It catalyses the reaction N-terminal glycyl-[protein] + tetradecanoyl-CoA = N-tetradecanoylglycyl-[protein] + CoA + H(+). Its function is as follows. Adds a myristoyl group to the N-terminal glycine residue of certain cellular proteins. The protein is Glycylpeptide N-tetradecanoyltransferase (nmt) of Dictyostelium discoideum (Social amoeba).